Reading from the N-terminus, the 152-residue chain is SsrA-binding protein (152 aa).

The protein belongs to the SmpB family.

It localises to the cytoplasm. Functionally, required for rescue of stalled ribosomes mediated by trans-translation. Binds to transfer-messenger RNA (tmRNA), required for stable association of tmRNA with ribosomes. tmRNA and SmpB together mimic tRNA shape, replacing the anticodon stem-loop with SmpB. tmRNA is encoded by the ssrA gene; the 2 termini fold to resemble tRNA(Ala) and it encodes a 'tag peptide', a short internal open reading frame. During trans-translation Ala-aminoacylated tmRNA acts like a tRNA, entering the A-site of stalled ribosomes, displacing the stalled mRNA. The ribosome then switches to translate the ORF on the tmRNA; the nascent peptide is terminated with the 'tag peptide' encoded by the tmRNA and targeted for degradation. The ribosome is freed to recommence translation, which seems to be the essential function of trans-translation. The protein is SsrA-binding protein of Helicobacter pylori (strain J99 / ATCC 700824) (Campylobacter pylori J99).